We begin with the raw amino-acid sequence, 373 residues long: Queuine tRNA-ribosyltransferase (373 aa).

Asp-89 serves as the catalytic Proton acceptor. Substrate-binding positions include Asp-89–Phe-93, Asp-143, Gln-185, and Gly-212. Residues Gly-243 to Asp-249 are RNA binding. The active-site Nucleophile is the Asp-262. The interval Thr-267–Arg-271 is RNA binding; important for wobble base 34 recognition. Residues Cys-300, Cys-302, Cys-305, and His-331 each contribute to the Zn(2+) site.

Belongs to the queuine tRNA-ribosyltransferase family. Homodimer. Within each dimer, one monomer is responsible for RNA recognition and catalysis, while the other monomer binds to the replacement base PreQ1. Zn(2+) serves as cofactor.

It catalyses the reaction 7-aminomethyl-7-carbaguanine + guanosine(34) in tRNA = 7-aminomethyl-7-carbaguanosine(34) in tRNA + guanine. It participates in tRNA modification; tRNA-queuosine biosynthesis. In terms of biological role, catalyzes the base-exchange of a guanine (G) residue with the queuine precursor 7-aminomethyl-7-deazaguanine (PreQ1) at position 34 (anticodon wobble position) in tRNAs with GU(N) anticodons (tRNA-Asp, -Asn, -His and -Tyr). Catalysis occurs through a double-displacement mechanism. The nucleophile active site attacks the C1' of nucleotide 34 to detach the guanine base from the RNA, forming a covalent enzyme-RNA intermediate. The proton acceptor active site deprotonates the incoming PreQ1, allowing a nucleophilic attack on the C1' of the ribose to form the product. After dissociation, two additional enzymatic reactions on the tRNA convert PreQ1 to queuine (Q), resulting in the hypermodified nucleoside queuosine (7-(((4,5-cis-dihydroxy-2-cyclopenten-1-yl)amino)methyl)-7-deazaguanosine). The chain is Queuine tRNA-ribosyltransferase from Marinobacter nauticus (strain ATCC 700491 / DSM 11845 / VT8) (Marinobacter aquaeolei).